We begin with the raw amino-acid sequence, 396 residues long: Phosphoglycerate kinase (396 aa).

Residues Asp-21–Asn-23, Arg-36, His-59–Lys-62, Arg-119, and Arg-156 each bind substrate. ATP-binding positions include Lys-206, Glu-325, and Gly-352–Ser-355.

Belongs to the phosphoglycerate kinase family. In terms of assembly, monomer.

It is found in the cytoplasm. It catalyses the reaction (2R)-3-phosphoglycerate + ATP = (2R)-3-phospho-glyceroyl phosphate + ADP. It functions in the pathway carbohydrate degradation; glycolysis; pyruvate from D-glyceraldehyde 3-phosphate: step 2/5. This chain is Phosphoglycerate kinase, found in Staphylococcus carnosus (strain TM300).